The sequence spans 128 residues: Fluoride-specific ion channel FluC (128 aa).

Helical transmembrane passes span 5 to 25 (LFISCGAILGASLRWAIGLLF), 34 to 54 (FGALIANLLGCLIIGVLLGLF), 67 to 87 (FLITGFLGSLTTFSSFSSEVV), and 99 to 119 (FCVLMMHLFGCLAMTVLGIWI). The Na(+) site is built by glycine 74 and threonine 77.

It belongs to the fluoride channel Fluc/FEX (TC 1.A.43) family.

It localises to the cell inner membrane. It catalyses the reaction fluoride(in) = fluoride(out). Its activity is regulated as follows. Na(+) is not transported, but it plays an essential structural role and its presence is essential for fluoride channel function. In terms of biological role, fluoride-specific ion channel. Important for reducing fluoride concentration in the cell, thus reducing its toxicity. This Haemophilus influenzae (strain PittEE) protein is Fluoride-specific ion channel FluC.